Here is a 162-residue protein sequence, read N- to C-terminus: Nucleotide-binding protein SAV_4896 (162 aa).

It belongs to the YajQ family.

Its function is as follows. Nucleotide-binding protein. The sequence is that of Nucleotide-binding protein SAV_4896 from Streptomyces avermitilis (strain ATCC 31267 / DSM 46492 / JCM 5070 / NBRC 14893 / NCIMB 12804 / NRRL 8165 / MA-4680).